The sequence spans 369 residues: MHGESPIKRRESRKIWVGNVPVGGDAPIAVQSMTNSDTNDVAATVAQINRLEAAGVDIVRVSVPDMDAAEAFGKIKQLVKVPLVADIHFDYKIALRVAELGVDCLRINPGNIGREDRVRAVVDAARDRGIPIRIGVNAGSLEKDLQKKYGEPTPAALVESALRHVEHLERLNFQDFKVSVKASDVFMAVEAYRLLAKEIVQPLHLGITEAGGLRSGTVKSAVGLGMLLAEGIGDTIRISLAADPVEEVKVGYDILKSLHLRSRGINFIACPSCSRQNFDVVKTMNELEGRLEDLLVPLDVAVIGCVVNGPGEAKEAHIGLTGGTPNLIYIDGKPSQKLTNDNLVDELEKLIREKAAEKVEADAAVIARG.

[4Fe-4S] cluster-binding residues include cysteine 270, cysteine 273, cysteine 305, and glutamate 312.

It belongs to the IspG family. Requires [4Fe-4S] cluster as cofactor.

The enzyme catalyses (2E)-4-hydroxy-3-methylbut-2-enyl diphosphate + oxidized [flavodoxin] + H2O + 2 H(+) = 2-C-methyl-D-erythritol 2,4-cyclic diphosphate + reduced [flavodoxin]. The protein operates within isoprenoid biosynthesis; isopentenyl diphosphate biosynthesis via DXP pathway; isopentenyl diphosphate from 1-deoxy-D-xylulose 5-phosphate: step 5/6. Functionally, converts 2C-methyl-D-erythritol 2,4-cyclodiphosphate (ME-2,4cPP) into 1-hydroxy-2-methyl-2-(E)-butenyl 4-diphosphate. This Pseudomonas fluorescens (strain Pf0-1) protein is 4-hydroxy-3-methylbut-2-en-1-yl diphosphate synthase (flavodoxin).